The chain runs to 252 residues: Cilia- and flagella-associated protein 300 (252 aa).

Belongs to the CFAP300 family.

It localises to the cytoplasm. The protein resides in the cytoskeleton. Its subcellular location is the cilium axoneme. Functionally, cilium- and flagellum-specific protein that plays a role in axonemal structure organization and motility. Plays a role in outer and inner axonemal dynein arm assembly. This chain is Cilia- and flagella-associated protein 300, found in Paramecium tetraurelia.